A 28-amino-acid polypeptide reads, in one-letter code: Ranatuerin-2SEb (28 aa).

Residues cysteine 23 and cysteine 28 are joined by a disulfide bond.

In terms of tissue distribution, expressed by the skin glands.

It localises to the secreted. In terms of biological role, mast cell degranulating peptide. Causes histamine release from rat peritoneal mast cells in vitro. Has antibacterial activity against the Gram-negative bacterium E.coli K12 and Gram-positive bacterium M.luteus NCT C2665. The sequence is that of Ranatuerin-2SEb from Lithobates sevosus (Dusky gopher frog).